The chain runs to 576 residues: Chaperonin CPN60-2, mitochondrial (576 aa).

The N-terminal 34 residues, 1-34 (MYRAAASLASKARQAGSSSAARQVGSRLAWSRNY), are a transit peptide targeting the mitochondrion.

It belongs to the chaperonin (HSP60) family.

The protein localises to the mitochondrion. In terms of biological role, implicated in mitochondrial protein import and macromolecular assembly. May facilitate the correct folding of imported proteins. May also prevent misfolding and promote the refolding and proper assembly of unfolded polypeptides generated under stress conditions in the mitochondrial matrix. This chain is Chaperonin CPN60-2, mitochondrial (CPN60II), found in Zea mays (Maize).